Consider the following 462-residue polypeptide: MDAMQKTIEYTSVSRIAGPLMVIEGIEGIAYGEIVDITTPNGEKRTGQVLEAREDIAVVQVFEGTSELNTSETRVRFTGETAKIGVSKDMLGRIFNGAGKPLDGGPEIIAEKKVDINGYPLNPVSRNPPNAFVQTGISTIDGTNTLVRGQKIPIFSGSGLPHNMLAAQIARQAKVRGEGEQFAVVFAAMGITSEESNYFMDEFKKTGALEKAVVFINLADDPAIERIITPRIALTTAEYLAYEKGMHVLVILTDLTNYCEALREIAAARNEVPGRRGYPGYMYTDLASLYERAGRVKGKEGTVTQIPILTMPHDDITHPIPDLTGYITEGQIVLSRELNRKGIYPPVDILPSLSRLAGNGQGPGKTRDDHAKVISQAYAAYAEGRGLRDLVAVVGEEALTERDRAFLKFADAFEGRVVTQGVDEDRSIEETLDIIWELLTILPKSELKRVSDELIEKYLPKK.

Belongs to the ATPase alpha/beta chains family. In terms of assembly, has multiple subunits with at least A(3), B(3), C, D, E, F, H, I and proteolipid K(x).

It is found in the cell membrane. In terms of biological role, component of the A-type ATP synthase that produces ATP from ADP in the presence of a proton gradient across the membrane. The B chain is a regulatory subunit. This chain is A-type ATP synthase subunit B, found in Methanococcus vannielii (strain ATCC 35089 / DSM 1224 / JCM 13029 / OCM 148 / SB).